The chain runs to 207 residues: Uridine kinase (207 aa).

13–20 (GASGSGKT) is a binding site for ATP.

This sequence belongs to the uridine kinase family.

Its subcellular location is the cytoplasm. It carries out the reaction uridine + ATP = UMP + ADP + H(+). The catalysed reaction is cytidine + ATP = CMP + ADP + H(+). The protein operates within pyrimidine metabolism; CTP biosynthesis via salvage pathway; CTP from cytidine: step 1/3. It functions in the pathway pyrimidine metabolism; UMP biosynthesis via salvage pathway; UMP from uridine: step 1/1. This chain is Uridine kinase, found in Ureaplasma parvum serovar 3 (strain ATCC 27815 / 27 / NCTC 11736).